The chain runs to 359 residues: Maleylacetate reductase 2 (359 aa).

This sequence belongs to the iron-containing alcohol dehydrogenase family. In terms of assembly, homodimer.

It catalyses the reaction 3-oxoadipate + NAD(+) = maleylacetate + NADH + H(+). The catalysed reaction is 3-oxoadipate + NADP(+) = maleylacetate + NADPH + H(+). It participates in aromatic compound metabolism; 3-chlorocatechol degradation. Its activity is regulated as follows. Inhibited by p-chloromercuribenzoate and by 3-oxoadipate, and, in a temperature-dependent manner, by manganese. Plays a major role in the degradation of chloroaromatic compounds by channeling maleylacetate and some of its substituted derivatives into the 3-oxoadipate pathway. This enzyme converts maleylacetate and 2-chloromaleylacetate with similar efficiencies. NADH is preferred to NADPH as the cosubstrate. The protein is Maleylacetate reductase 2 (tfdFII) of Cupriavidus pinatubonensis (strain JMP 134 / LMG 1197) (Cupriavidus necator (strain JMP 134)).